Consider the following 120-residue polypeptide: Flagellar protein FliT (120 aa).

The required for homodimerization stretch occupies residues Met1–Ile50. The fliD binding stretch occupies residues Leu60–Arg98.

The protein belongs to the FliT family. As to quaternary structure, homodimer. Interacts with FliD and FlhC.

It localises to the cytoplasm. The protein localises to the cytosol. In terms of biological role, dual-function protein that regulates the transcription of class 2 flagellar operons and that also acts as an export chaperone for the filament-capping protein FliD. As a transcriptional regulator, acts as an anti-FlhDC factor; it directly binds FlhC, thus inhibiting the binding of the FlhC/FlhD complex to class 2 promoters, resulting in decreased expression of class 2 flagellar operons. As a chaperone, effects FliD transition to the membrane by preventing its premature polymerization, and by directing it to the export apparatus. This chain is Flagellar protein FliT, found in Yersinia pestis bv. Antiqua (strain Antiqua).